We begin with the raw amino-acid sequence, 562 residues long: Probable malate:quinone oxidoreductase (562 aa).

Residues 530–562 (EVPDKSATPTDPTIAPKHQHSTTHNANSEMQAL) form a disordered region. Over residues 551–562 (TTHNANSEMQAL) the composition is skewed to polar residues.

Belongs to the MQO family. The cofactor is FAD.

It catalyses the reaction (S)-malate + a quinone = a quinol + oxaloacetate. Its pathway is carbohydrate metabolism; tricarboxylic acid cycle; oxaloacetate from (S)-malate (quinone route): step 1/1. This chain is Probable malate:quinone oxidoreductase, found in Xylella fastidiosa (strain M12).